Here is a 294-residue protein sequence, read N- to C-terminus: Phosphatidylglycerol--prolipoprotein diacylglyceryl transferase (294 aa).

The next 7 membrane-spanning stretches (helical) occupy residues 21-41 (VSLHWYGMMYLIGFVFALWLA), 60-80 (LLYVGFVGVFIGGRLGYVLFY), 96-116 (WDGGMSFHGGLIGVICAMIWF), 124-144 (FFQVADFVAPLIPFGLGLGRI), 199-219 (SQLYEMFLEGVVLFIILNIFV), 226-246 (GSVSGLFLIGYGAFRIIVEFF), and 259-279 (ISMGQILSIPMIILGIIFMVW). A 1,2-diacyl-sn-glycero-3-phospho-(1'-sn-glycerol) is bound at residue Arg-143.

The protein belongs to the Lgt family.

The protein localises to the cell inner membrane. The enzyme catalyses L-cysteinyl-[prolipoprotein] + a 1,2-diacyl-sn-glycero-3-phospho-(1'-sn-glycerol) = an S-1,2-diacyl-sn-glyceryl-L-cysteinyl-[prolipoprotein] + sn-glycerol 1-phosphate + H(+). Its pathway is protein modification; lipoprotein biosynthesis (diacylglyceryl transfer). Catalyzes the transfer of the diacylglyceryl group from phosphatidylglycerol to the sulfhydryl group of the N-terminal cysteine of a prolipoprotein, the first step in the formation of mature lipoproteins. The protein is Phosphatidylglycerol--prolipoprotein diacylglyceryl transferase of Proteus mirabilis (strain HI4320).